We begin with the raw amino-acid sequence, 312 residues long: Ribose-phosphate pyrophosphokinase (312 aa).

Residues 34–36 and 93–94 each bind ATP; these read DQE and RQ. Positions 127 and 167 each coordinate Mg(2+). Lysine 191 is an active-site residue. D-ribose 5-phosphate-binding positions include arginine 193, aspartate 217, and 221–225; that span reads DSGGT.

This sequence belongs to the ribose-phosphate pyrophosphokinase family. Class I subfamily. In terms of assembly, homohexamer. The cofactor is Mg(2+).

It localises to the cytoplasm. It catalyses the reaction D-ribose 5-phosphate + ATP = 5-phospho-alpha-D-ribose 1-diphosphate + AMP + H(+). The protein operates within metabolic intermediate biosynthesis; 5-phospho-alpha-D-ribose 1-diphosphate biosynthesis; 5-phospho-alpha-D-ribose 1-diphosphate from D-ribose 5-phosphate (route I): step 1/1. In terms of biological role, involved in the biosynthesis of the central metabolite phospho-alpha-D-ribosyl-1-pyrophosphate (PRPP) via the transfer of pyrophosphoryl group from ATP to 1-hydroxyl of ribose-5-phosphate (Rib-5-P). The chain is Ribose-phosphate pyrophosphokinase from Hyphomonas neptunium (strain ATCC 15444).